The sequence spans 336 residues: Inositol 2-dehydrogenase (336 aa).

It belongs to the Gfo/Idh/MocA family. As to quaternary structure, homotetramer.

The enzyme catalyses myo-inositol + NAD(+) = scyllo-inosose + NADH + H(+). Involved in the oxidation of myo-inositol (MI) to 2-keto-myo-inositol (2KMI or 2-inosose). This Pseudomonas savastanoi pv. phaseolicola (strain 1448A / Race 6) (Pseudomonas syringae pv. phaseolicola (strain 1448A / Race 6)) protein is Inositol 2-dehydrogenase.